A 286-amino-acid polypeptide reads, in one-letter code: Probable xyloglucan endotransglucosylase/hydrolase protein 23 (286 aa).

Residues 1–24 form the signal peptide; the sequence is MAMISYSTIVVALLASFMICSVSA. The GH16 domain maps to 25–214; sequence NFQRDVEITW…WSKAPFTASY (190 aa). E100 (nucleophile) is an active-site residue. The active-site Proton donor is the E104. Position 104 (E104) interacts with xyloglucan. An N-linked (GlcNAc...) asparagine glycan is attached at N108. Residues 117–119, 127–129, 193–194, and G198 each bind xyloglucan; these read HTN, DRE, and EW. An intrachain disulfide couples C222 to C231. N233 is a glycosylation site (N-linked (GlcNAc...) asparagine). Cysteines 269 and 283 form a disulfide. R274 serves as a coordination point for xyloglucan.

It belongs to the glycosyl hydrolase 16 family. XTH group 2 subfamily. In terms of processing, contains at least one intrachain disulfide bond essential for its enzymatic activity.

Its subcellular location is the secreted. The protein resides in the cell wall. The protein localises to the extracellular space. It is found in the apoplast. It catalyses the reaction breaks a beta-(1-&gt;4) bond in the backbone of a xyloglucan and transfers the xyloglucanyl segment on to O-4 of the non-reducing terminal glucose residue of an acceptor, which can be a xyloglucan or an oligosaccharide of xyloglucan.. Catalyzes xyloglucan endohydrolysis (XEH) and/or endotransglycosylation (XET). Cleaves and religates xyloglucan polymers, an essential constituent of the primary cell wall, and thereby participates in cell wall construction of growing tissues. The sequence is that of Probable xyloglucan endotransglucosylase/hydrolase protein 23 (XTH23) from Arabidopsis thaliana (Mouse-ear cress).